Consider the following 195-residue polypeptide: U8 snoRNA-decapping enzyme (195 aa).

One can recognise a Nudix hydrolase domain in the interval 18-168; sequence GWRHACHAML…LENTFIGNAR (151 aa). Substrate contacts are provided by histidine 24, arginine 50, and phenylalanine 57. Residues glycine 59, glutamate 76, glutamate 80, and histidine 99 each coordinate Mn(2+). Positions 61-82 match the Nudix box motif; it reads FVDLRDGSLEDGLNRELGEELG. Residues asparagine 166 and glutamine 170 each contribute to the substrate site. Mn(2+) is bound at residue glutamate 173.

Belongs to the Nudix hydrolase family. NUDT16 subfamily. Homodimer. It depends on Mg(2+) as a cofactor. Mn(2+) serves as cofactor. The cofactor is Co(2+).

The protein resides in the nucleus. The protein localises to the nucleolus. It is found in the nucleoplasm. Its subcellular location is the cytoplasm. It carries out the reaction a 5'-end (N(7)-methyl 5'-triphosphoguanosine)-ribonucleoside in mRNA + H2O = N(7)-methyl-GDP + a 5'-end phospho-ribonucleoside in mRNA + 2 H(+). It catalyses the reaction IDP + H2O = IMP + phosphate + H(+). The enzyme catalyses dIDP + H2O = dIMP + phosphate + H(+). The catalysed reaction is a 5'-end NAD(+)-phospho-ribonucleoside in mRNA + H2O = a 5'-end phospho-ribonucleoside in mRNA + NAD(+) + H(+). It carries out the reaction a 5'-end FAD-phospho-ribonucleoside in mRNA + H2O = a 5'-end phospho-adenosine-phospho-ribonucleoside in mRNA + FMN + 2 H(+). It catalyses the reaction a 5'-end CoA-ribonucleoside in mRNA + H2O = a 5'-end phospho-adenosine-phospho-ribonucleoside in mRNA + (R)-4'-phosphopantetheine + 2 H(+). Its function is as follows. RNA-binding and decapping enzyme that catalyzes the cleavage of the cap structure of snoRNAs and mRNAs in a metal-dependent manner. Part of the U8 snoRNP complex that is required for the accumulation of mature 5.8S and 28S rRNA. Has diphosphatase activity and removes m7G and/or m227G caps from U8 snoRNA and leaves a 5'monophosphate on the RNA. Also catalyzes the cleavage of the cap structure on mRNAs. Does not hydrolyze cap analog structures like 7-methylguanosine nucleoside triphosphate (m7GpppG). Also hydrolysis m7G- and m227G U3-capped RNAs but with less efficiencies. Has broad substrate specificity with manganese or cobalt as cofactor and can act on various RNA species. Binds to the U8 snoRNA; metal is not required for RNA-binding. May play a role in the regulation of snoRNAs and mRNAs degradation. Also acts as a phosphatase; hydrolyzes the non-canonical purine nucleotides inosine diphosphate (IDP) and deoxyinosine diphosphate (dITP) as well as guanosine diphosphate (GDP), deoxyguanosine diphosphate (dGDP), xanthine diphosphate (XDP), inosine triphosphate (ITP) and deoxyinosine triphosphate (ITP) to their respective monophosphate derivatives and does not distinguish between the deoxy- and ribose forms. The order of activity with different substrates is IDP &gt; dIDP &gt;&gt; GDP = dGDP &gt; XDP = ITP = dITP. Binds strongly to GTP, ITP and XTP. Participates in the hydrolysis of dIDP/IDP and probably excludes non-canonical purines from RNA and DNA precursor pools, thus preventing their incorporation into RNA and DNA and avoiding chromosomal lesions. Exhibits decapping activity towards NAD-capped RNAs and FAD-capped RNAs. Exhibits decapping activity towards dpCoA-capped RNAs in vitro. The protein is U8 snoRNA-decapping enzyme (NUDT16) of Ovis aries (Sheep).